The sequence spans 143 residues: D-aminoacyl-tRNA deacylase (143 aa).

A Gly-cisPro motif, important for rejection of L-amino acids motif is present at residues 135–136 (GP).

The protein belongs to the DTD family. As to quaternary structure, homodimer.

The protein localises to the cytoplasm. It carries out the reaction glycyl-tRNA(Ala) + H2O = tRNA(Ala) + glycine + H(+). It catalyses the reaction a D-aminoacyl-tRNA + H2O = a tRNA + a D-alpha-amino acid + H(+). In terms of biological role, an aminoacyl-tRNA editing enzyme that deacylates mischarged D-aminoacyl-tRNAs. Also deacylates mischarged glycyl-tRNA(Ala), protecting cells against glycine mischarging by AlaRS. Acts via tRNA-based rather than protein-based catalysis; rejects L-amino acids rather than detecting D-amino acids in the active site. By recycling D-aminoacyl-tRNA to D-amino acids and free tRNA molecules, this enzyme counteracts the toxicity associated with the formation of D-aminoacyl-tRNA entities in vivo and helps enforce protein L-homochirality. The sequence is that of D-aminoacyl-tRNA deacylase from Mycolicibacterium smegmatis (strain ATCC 700084 / mc(2)155) (Mycobacterium smegmatis).